We begin with the raw amino-acid sequence, 131 residues long: Protein Turandot M (131 aa).

Residues 1–23 (MNPTVYLSCLVVFSLFYLGKAQA) form the signal peptide.

Belongs to the Turandot family.

It is found in the secreted. Its function is as follows. A humoral factor that may play a role in stress tolerance. Requires Mekk1 expression in the fat body to regulate response to septic injury and consequent immune response. This chain is Protein Turandot M, found in Drosophila yakuba (Fruit fly).